The following is a 413-amino-acid chain: Serine/threonine transporter SstT (413 aa).

9 helical membrane-spanning segments follow: residues 15–35 (NIVIQILIGIIAGVALATLAP), 48–68 (FVSALKAVAPILVFILVAASI), 82–102 (VIVLYLVGTFCASLTAVVMSF), 141–161 (ALMTGNFIGILGWAVALGLGL), 178–198 (CISAIVTVVIRFAPIGIFGLV), 216–236 (LLAVLLGSMAFIALIVNPLIV), 290–310 (IPLGATINMAGAAITITVLTL), 330–350 (LVAAVSACGASGVAGGSLLLI), and 357–377 (FGISNDIAMQVVAIGFIIGVV).

Belongs to the dicarboxylate/amino acid:cation symporter (DAACS) (TC 2.A.23) family.

The protein localises to the cell inner membrane. The enzyme catalyses L-serine(in) + Na(+)(in) = L-serine(out) + Na(+)(out). It carries out the reaction L-threonine(in) + Na(+)(in) = L-threonine(out) + Na(+)(out). In terms of biological role, involved in the import of serine and threonine into the cell, with the concomitant import of sodium (symport system). The chain is Serine/threonine transporter SstT from Aliivibrio fischeri (strain ATCC 700601 / ES114) (Vibrio fischeri).